A 398-amino-acid polypeptide reads, in one-letter code: NADH dehydrogenase [ubiquinone] iron-sulfur protein 2 (398 aa).

3 residues coordinate [4Fe-4S] cluster: C261, C267, and C282.

This sequence belongs to the complex I 49 kDa subunit family. Complex I is composed of about 45 different subunits. This is a component of the iron-sulfur (IP) fragment of the enzyme. [4Fe-4S] cluster serves as cofactor.

Its subcellular location is the mitochondrion. It carries out the reaction a ubiquinone + NADH + 5 H(+)(in) = a ubiquinol + NAD(+) + 4 H(+)(out). Functionally, core subunit of the mitochondrial membrane respiratory chain NADH dehydrogenase (Complex I) that is believed to belong to the minimal assembly required for catalysis. Complex I functions in the transfer of electrons from NADH to the respiratory chain. The immediate electron acceptor for the enzyme is believed to be ubiquinone. Component of the iron-sulfur (IP) fragment of the enzyme. This chain is NADH dehydrogenase [ubiquinone] iron-sulfur protein 2 (NAD7), found in Nephroselmis olivacea (Green alga).